Consider the following 159-residue polypeptide: 2-C-methyl-D-erythritol 2,4-cyclodiphosphate synthase (159 aa).

Positions 10 and 12 each coordinate a divalent metal cation. Residues 10–12 (DVH) and 36–37 (HS) contribute to the 4-CDP-2-C-methyl-D-erythritol 2-phosphate site. A divalent metal cation is bound at residue His-44. Residues 58 to 60 (DIG), 63 to 67 (FSDTD), and Arg-144 contribute to the 4-CDP-2-C-methyl-D-erythritol 2-phosphate site.

This sequence belongs to the IspF family. In terms of assembly, homotrimer. Requires a divalent metal cation as cofactor.

It catalyses the reaction 4-CDP-2-C-methyl-D-erythritol 2-phosphate = 2-C-methyl-D-erythritol 2,4-cyclic diphosphate + CMP. Its pathway is isoprenoid biosynthesis; isopentenyl diphosphate biosynthesis via DXP pathway; isopentenyl diphosphate from 1-deoxy-D-xylulose 5-phosphate: step 4/6. Its function is as follows. Involved in the biosynthesis of isopentenyl diphosphate (IPP) and dimethylallyl diphosphate (DMAPP), two major building blocks of isoprenoid compounds. Catalyzes the conversion of 4-diphosphocytidyl-2-C-methyl-D-erythritol 2-phosphate (CDP-ME2P) to 2-C-methyl-D-erythritol 2,4-cyclodiphosphate (ME-CPP) with a corresponding release of cytidine 5-monophosphate (CMP). The chain is 2-C-methyl-D-erythritol 2,4-cyclodiphosphate synthase from Paraburkholderia phytofirmans (strain DSM 17436 / LMG 22146 / PsJN) (Burkholderia phytofirmans).